A 557-amino-acid chain; its full sequence is Formate--tetrahydrofolate ligase (557 aa).

An ATP-binding site is contributed by 66–73 (TPAGEGKS).

It belongs to the formate--tetrahydrofolate ligase family.

It carries out the reaction (6S)-5,6,7,8-tetrahydrofolate + formate + ATP = (6R)-10-formyltetrahydrofolate + ADP + phosphate. The protein operates within one-carbon metabolism; tetrahydrofolate interconversion. This is Formate--tetrahydrofolate ligase from Clostridium botulinum (strain ATCC 19397 / Type A).